A 293-amino-acid polypeptide reads, in one-letter code: Glycine--tRNA ligase alpha subunit (293 aa).

It belongs to the class-II aminoacyl-tRNA synthetase family. In terms of assembly, tetramer of two alpha and two beta subunits.

The protein resides in the cytoplasm. It catalyses the reaction tRNA(Gly) + glycine + ATP = glycyl-tRNA(Gly) + AMP + diphosphate. This Prochlorococcus marinus (strain MIT 9211) protein is Glycine--tRNA ligase alpha subunit.